The chain runs to 368 residues: Probable auxin efflux carrier component 5b (368 aa).

Helical transmembrane passes span 7 to 27 (VYKV…GYGS), 39 to 59 (CDAV…FDFA), 71 to 91 (VLAA…ACAA), 114 to 134 (CITG…VPLL), 145 to 165 (LIVQ…LLAF), 227 to 247 (VLGV…PSII), 251 to 271 (VLIM…LFMA), 286 to 306 (LGMA…AFAL), 312 to 332 (LLRL…FVFA), and 347 to 367 (IFGT…LGFI).

The protein belongs to the auxin efflux carrier (TC 2.A.69.1) family. As to expression, expressed at low levels in roots and shoot apex.

It is found in the membrane. In terms of biological role, may act as a component of the auxin efflux carrier. In Oryza sativa subsp. japonica (Rice), this protein is Probable auxin efflux carrier component 5b.